The primary structure comprises 252 residues: 2-succinyl-6-hydroxy-2,4-cyclohexadiene-1-carboxylate synthase (252 aa).

It belongs to the AB hydrolase superfamily. MenH family. Monomer.

The enzyme catalyses 5-enolpyruvoyl-6-hydroxy-2-succinyl-cyclohex-3-ene-1-carboxylate = (1R,6R)-6-hydroxy-2-succinyl-cyclohexa-2,4-diene-1-carboxylate + pyruvate. Its pathway is quinol/quinone metabolism; 1,4-dihydroxy-2-naphthoate biosynthesis; 1,4-dihydroxy-2-naphthoate from chorismate: step 3/7. It participates in quinol/quinone metabolism; menaquinone biosynthesis. Functionally, catalyzes a proton abstraction reaction that results in 2,5-elimination of pyruvate from 2-succinyl-5-enolpyruvyl-6-hydroxy-3-cyclohexene-1-carboxylate (SEPHCHC) and the formation of 2-succinyl-6-hydroxy-2,4-cyclohexadiene-1-carboxylate (SHCHC). The chain is 2-succinyl-6-hydroxy-2,4-cyclohexadiene-1-carboxylate synthase from Escherichia coli (strain SMS-3-5 / SECEC).